Consider the following 177-residue polypeptide: Adenine phosphoribosyltransferase (177 aa).

This sequence belongs to the purine/pyrimidine phosphoribosyltransferase family. Homodimer.

Its subcellular location is the cytoplasm. The catalysed reaction is AMP + diphosphate = 5-phospho-alpha-D-ribose 1-diphosphate + adenine. It participates in purine metabolism; AMP biosynthesis via salvage pathway; AMP from adenine: step 1/1. In terms of biological role, catalyzes a salvage reaction resulting in the formation of AMP, that is energically less costly than de novo synthesis. The polypeptide is Adenine phosphoribosyltransferase (Chlorobium phaeobacteroides (strain DSM 266 / SMG 266 / 2430)).